The following is a 363-amino-acid chain: Cobalt-precorrin-5B C(1)-methyltransferase (363 aa).

Belongs to the CbiD family.

The enzyme catalyses Co-precorrin-5B + S-adenosyl-L-methionine = Co-precorrin-6A + S-adenosyl-L-homocysteine. The protein operates within cofactor biosynthesis; adenosylcobalamin biosynthesis; cob(II)yrinate a,c-diamide from sirohydrochlorin (anaerobic route): step 6/10. Its function is as follows. Catalyzes the methylation of C-1 in cobalt-precorrin-5B to form cobalt-precorrin-6A. In Burkholderia mallei (strain ATCC 23344), this protein is Cobalt-precorrin-5B C(1)-methyltransferase.